Reading from the N-terminus, the 373-residue chain is 4-hydroxy-3-methylbut-2-en-1-yl diphosphate synthase (flavodoxin) (373 aa).

Residues Cys270, Cys273, Cys305, and Glu312 each contribute to the [4Fe-4S] cluster site.

It belongs to the IspG family. [4Fe-4S] cluster is required as a cofactor.

It catalyses the reaction (2E)-4-hydroxy-3-methylbut-2-enyl diphosphate + oxidized [flavodoxin] + H2O + 2 H(+) = 2-C-methyl-D-erythritol 2,4-cyclic diphosphate + reduced [flavodoxin]. Its pathway is isoprenoid biosynthesis; isopentenyl diphosphate biosynthesis via DXP pathway; isopentenyl diphosphate from 1-deoxy-D-xylulose 5-phosphate: step 5/6. Converts 2C-methyl-D-erythritol 2,4-cyclodiphosphate (ME-2,4cPP) into 1-hydroxy-2-methyl-2-(E)-butenyl 4-diphosphate. The chain is 4-hydroxy-3-methylbut-2-en-1-yl diphosphate synthase (flavodoxin) from Serratia proteamaculans (strain 568).